A 200-amino-acid chain; its full sequence is Serine/arginine-rich splicing factor RSZ22 (200 aa).

Positions 2–71 (SRVYVGNLDP…NGWRVEQSHN (70 aa)) constitute an RRM domain. The segment covering 62 to 83 (NGWRVEQSHNRGERGGGGRGGD) has biased composition (basic and acidic residues). Disordered stretches follow at residues 62 to 97 (NGWR…RGGS) and 112 to 200 (RECR…RSRS). Gly residues predominate over residues 84–96 (RGGGGGGRGGRGG). Residues 99–116 (LKCYECGETGHFARECRN) form a CCHC-type zinc finger. A compositionally biased stretch (basic residues) spans 120-137 (TGRRRSKSRSRTPPRYRR). Phosphoserine occurs at positions 138, 147, 152, 160, 162, 174, and 200. A compositionally biased stretch (low complexity) spans 138–150 (SPSYGRRSYSPRA). The segment covering 151–166 (RSPPPPRRRSPSPPPA) has biased composition (pro residues).

It belongs to the splicing factor SR family. RSZ subfamily. Component of the spliceosome. Interacts with AFC2, RS2Z33 and RNU1. In terms of processing, extensively phosphorylated on serine residues in the RS domain. Phosphorylated by AFC2. As to expression, expressed in primary and lateral roots, stems, petioles, abaxial and adaxial epidermis cells, trichomes, unopened flowers, anther filaments, anthers, stigma, pollen, pollen tube, ovule funiculi, integuments, embryo sac and developing seeds.

It is found in the nucleus speckle. The protein localises to the nucleus. It localises to the nucleolus. The protein resides in the nucleoplasm. Its subcellular location is the cytoplasm. Sequence-specific RNA-binding protein probably involved in pre-mRNA splicing. In vitro, can complement efficiently splicing-deficient mammalian SRSF7-depleted HeLa cell extract. This chain is Serine/arginine-rich splicing factor RSZ22 (RSZ22), found in Arabidopsis thaliana (Mouse-ear cress).